The primary structure comprises 422 residues: Glucose-1-phosphate adenylyltransferase 2 (422 aa).

Alpha-D-glucose 1-phosphate contacts are provided by residues Tyr110, Gly175, 190–191, and Ser208; that span reads EK.

The protein belongs to the bacterial/plant glucose-1-phosphate adenylyltransferase family. In terms of assembly, homotetramer.

The enzyme catalyses alpha-D-glucose 1-phosphate + ATP + H(+) = ADP-alpha-D-glucose + diphosphate. It participates in glycan biosynthesis; glycogen biosynthesis. Involved in the biosynthesis of ADP-glucose, a building block required for the elongation reactions to produce glycogen. Catalyzes the reaction between ATP and alpha-D-glucose 1-phosphate (G1P) to produce pyrophosphate and ADP-Glc. The protein is Glucose-1-phosphate adenylyltransferase 2 of Alkalilimnicola ehrlichii (strain ATCC BAA-1101 / DSM 17681 / MLHE-1).